A 227-amino-acid chain; its full sequence is UPF0173 metal-dependent hydrolase DR_0006 (227 aa).

It belongs to the UPF0173 family.

This Deinococcus radiodurans (strain ATCC 13939 / DSM 20539 / JCM 16871 / CCUG 27074 / LMG 4051 / NBRC 15346 / NCIMB 9279 / VKM B-1422 / R1) protein is UPF0173 metal-dependent hydrolase DR_0006.